The primary structure comprises 279 residues: MAFQGTSRTLTQQSSAATSDDLQKILFSPEAIKKMATECDLGRHHWMRADNAISVRPLVPEVTHGRIASFFKSGYDVGELCSKGYMSVPQVLCAVTRTVSTDAEGSLRIYLADLGDKELSPIDGQCVSLHNHDLPALVSFQPTYDCPMETVGNRKRCFAVVIERHGYIGYTGTTASVCSNWQARFSSKNNNYTHIAAGKTLVLPFNRLAEQTKPSAVARLLKSQLNNIESSQYLLTNAKINQNARSESEDLNVESPPAAIGSSSASRSEAFRPQVVNGL.

The disordered stretch occupies residues 246–279 (SESEDLNVESPPAAIGSSSASRSEAFRPQVVNGL). A compositionally biased stretch (low complexity) spans 254–268 (ESPPAAIGSSSASRS).

The protein belongs to the cucumovirus movement protein family.

Its subcellular location is the host cell junction. It is found in the host plasmodesma. Transports viral genome to neighboring plant cells directly through plasmosdesmata, without any budding. The movement protein allows efficient cell to cell propagation, by bypassing the host cell wall barrier. Acts by forming a tubular structure at the host plasmodesmata, enlarging it enough to allow free passage of virion capsids. This Cucurbita pepo (Vegetable marrow) protein is Movement protein.